Consider the following 323-residue polypeptide: uncharacterized protein (323 aa).

Residues 1-21 form a disordered region; sequence MGSYYSTESTKSNESNETTNN. The N-myristoyl glycine; by host moiety is linked to residue Gly-2.

This is an uncharacterized protein from Acanthamoeba polyphaga (Amoeba).